The primary structure comprises 409 residues: Na(+)-translocating NADH-quinone reductase subunit F (409 aa).

The helical transmembrane segment at 5–25 threads the bilayer; that stretch reads FIFGIGAFTAIVLVLAVVILI. A 2Fe-2S ferredoxin-type domain is found at 34–128; the sequence is GDITISINND…SMDVELPEEV (95 aa). The [2Fe-2S] cluster site is built by Cys71, Cys77, Cys80, and Cys112. One can recognise an FAD-binding FR-type domain in the interval 131–271; the sequence is VKKWECTVIS…SGPFGEFFAK (141 aa).

This sequence belongs to the NqrF family. In terms of assembly, composed of six subunits; NqrA, NqrB, NqrC, NqrD, NqrE and NqrF. The cofactor is [2Fe-2S] cluster. FAD is required as a cofactor.

It localises to the cell inner membrane. The catalysed reaction is a ubiquinone + n Na(+)(in) + NADH + H(+) = a ubiquinol + n Na(+)(out) + NAD(+). In terms of biological role, NQR complex catalyzes the reduction of ubiquinone-1 to ubiquinol by two successive reactions, coupled with the transport of Na(+) ions from the cytoplasm to the periplasm. The first step is catalyzed by NqrF, which accepts electrons from NADH and reduces ubiquinone-1 to ubisemiquinone by a one-electron transfer pathway. The chain is Na(+)-translocating NADH-quinone reductase subunit F from Mannheimia succiniciproducens (strain KCTC 0769BP / MBEL55E).